Reading from the N-terminus, the 238-residue chain is Ribosomal RNA small subunit methyltransferase G (238 aa).

S-adenosyl-L-methionine is bound by residues Gly-80, 131 to 132 (AE), and Arg-148.

The protein belongs to the methyltransferase superfamily. RNA methyltransferase RsmG family.

It is found in the cytoplasm. Functionally, specifically methylates the N7 position of a guanine in 16S rRNA. This is Ribosomal RNA small subunit methyltransferase G from Thermotoga maritima (strain ATCC 43589 / DSM 3109 / JCM 10099 / NBRC 100826 / MSB8).